The primary structure comprises 333 residues: Minor fimbrium tip subunit MfA4 (333 aa).

Positions 1–18 (MKKYLLYASLLTSVLLFS) are cleaved as a signal peptide. C19 carries N-palmitoyl cysteine lipidation. Residue C19 is the site of S-diacylglycerol cysteine attachment. A propeptide spanning residues 19–53 (CSKNNPSEPVEDRSIEISIRVDDFTKTGETVRYER) is cleaved from the precursor.

This sequence belongs to the bacteroidetes fimbrillin superfamily. FimA/Mfa1 family. As to quaternary structure, component of the fimbrium tip. Minor fimbriae are composed of a structural subunit, most often Mfa1, and the accessory subunits Mfa3, Mfa4 and Mfa5. Mfa4 is required for Mfa3 and Mfa5 insertion into the fimbrium. Fimbrium assembly occurs by linear, head-to-tail oligomerization of fimbrial subunits. This is mediated via insertion of a C-terminal beta-strand from one subunit into a groove in the N-terminal domain of the following subunit.

It is found in the fimbrium. It localises to the cell outer membrane. Its function is as follows. Tip subunit of the minor fimbriae. These filamentous pili are attached to the cell surface; they mediate biofilm formation, adhesion onto host cells and onto other bacteria that are part of the oral microbiome. They play an important role in invasion of periodontal tissues and are recognized as major virulence factors. The polypeptide is Minor fimbrium tip subunit MfA4 (Porphyromonas gingivalis (strain ATCC 33277 / DSM 20709 / CIP 103683 / JCM 12257 / NCTC 11834 / 2561)).